Reading from the N-terminus, the 72-residue chain is Beta-defensin 104 (72 aa).

Positions 1–22 are cleaved as a signal peptide; it reads MQRLVLLLAISLLLYQDLPVRS. 3 cysteine pairs are disulfide-bonded: C30–C57, C37–C51, and C41–C58.

Belongs to the beta-defensin family. As to expression, high expression in the testis. Gastric antrum exhibited relatively high levels. A lower expression is observed in uterus and neutrophils thyroid gland, lung, and kidney. No detectable expression in other tissues tested.

The protein resides in the secreted. Functionally, has antimicrobial activity. Synergistic effects with lysozyme and DEFB103. This is Beta-defensin 104 (DEFB104A) from Homo sapiens (Human).